Here is a 175-residue protein sequence, read N- to C-terminus: Large ribosomal subunit protein uL16 (175 aa).

The protein belongs to the universal ribosomal protein uL16 family.

The sequence is that of Large ribosomal subunit protein uL16 from Caldivirga maquilingensis (strain ATCC 700844 / DSM 13496 / JCM 10307 / IC-167).